A 148-amino-acid polypeptide reads, in one-letter code: Deoxyuridine 5'-triphosphate nucleotidohydrolase (148 aa).

Substrate is bound by residues 67–69 (RSG), Asn80, 84–86 (LID), and Met94.

The protein belongs to the dUTPase family. Requires Mg(2+) as cofactor.

It carries out the reaction dUTP + H2O = dUMP + diphosphate + H(+). It participates in pyrimidine metabolism; dUMP biosynthesis; dUMP from dCTP (dUTP route): step 2/2. Functionally, this enzyme is involved in nucleotide metabolism: it produces dUMP, the immediate precursor of thymidine nucleotides and it decreases the intracellular concentration of dUTP so that uracil cannot be incorporated into DNA. The protein is Deoxyuridine 5'-triphosphate nucleotidohydrolase of Burkholderia ambifaria (strain MC40-6).